Consider the following 668-residue polypeptide: DNA ligase (668 aa).

NAD(+)-binding positions include Asp32–Asp36, Ser81–Leu82, and Glu111. Lys113 serves as the catalytic N6-AMP-lysine intermediate. The NAD(+) site is built by Arg134, Glu171, Lys290, and Lys314. The Zn(2+) site is built by Cys408, Cys411, Cys426, and Cys432. The 78-residue stretch at Glu591–Ser668 folds into the BRCT domain.

This sequence belongs to the NAD-dependent DNA ligase family. LigA subfamily. Requires Mg(2+) as cofactor. It depends on Mn(2+) as a cofactor.

The enzyme catalyses NAD(+) + (deoxyribonucleotide)n-3'-hydroxyl + 5'-phospho-(deoxyribonucleotide)m = (deoxyribonucleotide)n+m + AMP + beta-nicotinamide D-nucleotide.. In terms of biological role, DNA ligase that catalyzes the formation of phosphodiester linkages between 5'-phosphoryl and 3'-hydroxyl groups in double-stranded DNA using NAD as a coenzyme and as the energy source for the reaction. It is essential for DNA replication and repair of damaged DNA. The chain is DNA ligase from Shewanella piezotolerans (strain WP3 / JCM 13877).